Consider the following 61-residue polypeptide: uncharacterized protein (61 aa).

The interval 1–40 (MRRGGEPQCDGREFRIASSPAREREDDNETAPPQTSAAQE) is disordered. Over residues 9 to 25 (CDGREFRIASSPARERE) the composition is skewed to basic and acidic residues.

This is an uncharacterized protein from Caenorhabditis elegans.